The following is an 89-amino-acid chain: Neuropeptide S (89 aa).

Residues 1–23 (MISSVKLNLILVLSLSTMHVFWC) form the signal peptide. Residues 24 to 67 (YPVPSSKVSGKSDYFLILLNSCPTRLDRSKELAFLKPILEKMFV) constitute a propeptide that is removed on maturation.

Its subcellular location is the secreted. Functionally, modulates arousal and anxiety. May play an important anorexigenic role. Binds to its receptor NPSR1 with nanomolar affinity to increase intracellular calcium concentrations. This is Neuropeptide S (NPS) from Homo sapiens (Human).